Here is a 541-residue protein sequence, read N- to C-terminus: Chaperonin GroEL 2 (541 aa).

ATP contacts are provided by residues 29-32 (TLGP), 86-90 (DGTTT), G413, 476-478 (NAA), and D492.

The protein belongs to the chaperonin (HSP60) family. In terms of assembly, forms a cylinder of 14 subunits composed of two heptameric rings stacked back-to-back. Interacts with the co-chaperonin GroES.

It localises to the cytoplasm. The enzyme catalyses ATP + H2O + a folded polypeptide = ADP + phosphate + an unfolded polypeptide.. Functionally, together with its co-chaperonin GroES, plays an essential role in assisting protein folding. The GroEL-GroES system forms a nano-cage that allows encapsulation of the non-native substrate proteins and provides a physical environment optimized to promote and accelerate protein folding. The sequence is that of Chaperonin GroEL 2 from Streptomyces coelicolor (strain ATCC BAA-471 / A3(2) / M145).